Here is a 429-residue protein sequence, read N- to C-terminus: Serine--tRNA ligase (429 aa).

An L-serine-binding site is contributed by 229 to 231; that stretch reads TAE. 260–262 contributes to the ATP binding site; that stretch reads RSE. Position 283 (Glu283) interacts with L-serine. Residue 347–350 coordinates ATP; that stretch reads EISS. Ser383 lines the L-serine pocket.

It belongs to the class-II aminoacyl-tRNA synthetase family. Type-1 seryl-tRNA synthetase subfamily. Homodimer. The tRNA molecule binds across the dimer.

The protein localises to the cytoplasm. It carries out the reaction tRNA(Ser) + L-serine + ATP = L-seryl-tRNA(Ser) + AMP + diphosphate + H(+). The enzyme catalyses tRNA(Sec) + L-serine + ATP = L-seryl-tRNA(Sec) + AMP + diphosphate + H(+). The protein operates within aminoacyl-tRNA biosynthesis; selenocysteinyl-tRNA(Sec) biosynthesis; L-seryl-tRNA(Sec) from L-serine and tRNA(Sec): step 1/1. Functionally, catalyzes the attachment of serine to tRNA(Ser). Is also able to aminoacylate tRNA(Sec) with serine, to form the misacylated tRNA L-seryl-tRNA(Sec), which will be further converted into selenocysteinyl-tRNA(Sec). In Orientia tsutsugamushi (strain Ikeda) (Rickettsia tsutsugamushi), this protein is Serine--tRNA ligase.